The following is a 156-amino-acid chain: Ribonuclease pancreatic (156 aa).

An N-terminal signal peptide occupies residues 1–28 (MALEKSLALLPLLVLVLLVLGWVQPSLG). Positions 33-43 (AQKFQRQHMDS) are enriched in basic and acidic residues. The interval 33-52 (AQKFQRQHMDSDGSPSSNPT) is disordered. Residues lysine 35 and arginine 38 each contribute to the substrate site. Histidine 40 functions as the Proton acceptor in the catalytic mechanism. 4 disulfides stabilise this stretch: cysteine 54–cysteine 112, cysteine 68–cysteine 123, cysteine 86–cysteine 138, and cysteine 93–cysteine 100. Asparagine 62 carries N-linked (GlcNAc...) asparagine glycosylation. Residues 69–73 (KPVNT), lysine 94, and arginine 113 each bind substrate. A glycan (N-linked (GlcNAc...) asparagine) is linked at asparagine 116. The active-site Proton donor is the histidine 147.

It belongs to the pancreatic ribonuclease family. Monomer. Interacts with and forms tight 1:1 complexes with RNH1. Dimerization of two such complexes may occur. Interaction with RNH1 inhibits this protein.

It is found in the secreted. It carries out the reaction an [RNA] containing cytidine + H2O = an [RNA]-3'-cytidine-3'-phosphate + a 5'-hydroxy-ribonucleotide-3'-[RNA].. The enzyme catalyses an [RNA] containing uridine + H2O = an [RNA]-3'-uridine-3'-phosphate + a 5'-hydroxy-ribonucleotide-3'-[RNA].. Its function is as follows. Endonuclease that catalyzes the cleavage of RNA on the 3' side of pyrimidine nucleotides. Acts on single-stranded and double-stranded RNA. The polypeptide is Ribonuclease pancreatic (RNASE1) (Saguinus oedipus (Cotton-top tamarin)).